Here is a 252-residue protein sequence, read N- to C-terminus: Fructose-1,6-bisphosphatase/inositol-1-monophosphatase (252 aa).

The Mg(2+) site is built by Glu65, Asp81, Ile83, and Asp84. Residues 84–86, Arg170, Phe175, and Arg194 each bind substrate; that span reads DGS. Asp201 is a binding site for Mg(2+).

Belongs to the inositol monophosphatase superfamily. FBPase class 4 family. Homodimer. Mg(2+) serves as cofactor.

The enzyme catalyses beta-D-fructose 1,6-bisphosphate + H2O = beta-D-fructose 6-phosphate + phosphate. It catalyses the reaction a myo-inositol phosphate + H2O = myo-inositol + phosphate. IMPase activity is inhibited by Ca(2+) and Zn(2+). In contrast to mammalian I-1-P phosphatases, is not inhibited by Li(+) up to 100 mM. Phosphatase with broad specificity; it can dephosphorylate fructose 1,6-bisphosphate, both D and L isomers of inositol-1-phosphate (I-1-P), 2'-AMP, pNPP, beta-glycerol phosphate, and alpha-D-glucose-1-phosphate. Cannot hydrolyze glucose-6-phosphate, fructose-6-phosphate, NAD(+) or 5'-AMP. May be involved in the biosynthesis of a unique osmolyte, di-myo-inositol 1,1-phosphate. The protein is Fructose-1,6-bisphosphatase/inositol-1-monophosphatase (suhB) of Methanocaldococcus jannaschii (strain ATCC 43067 / DSM 2661 / JAL-1 / JCM 10045 / NBRC 100440) (Methanococcus jannaschii).